We begin with the raw amino-acid sequence, 511 residues long: Maturase K (511 aa).

It belongs to the intron maturase 2 family. MatK subfamily.

It localises to the plastid. The protein resides in the chloroplast. Functionally, usually encoded in the trnK tRNA gene intron. Probably assists in splicing its own and other chloroplast group II introns. This Trifolium burchellianum (Wild clover) protein is Maturase K.